A 75-amino-acid chain; its full sequence is RNA-binding protein KhpA (75 aa).

A KH domain is found at 29-75 (SIIIELKVAPEDMGKVIGKQGRIAQAIRTLVKAAALKEKKRVIVEII).

Belongs to the KhpA RNA-binding protein family. As to quaternary structure, forms a complex with KhpB.

It is found in the cytoplasm. Functionally, a probable RNA chaperone. Forms a complex with KhpB which binds to cellular RNA and controls its expression. Plays a role in peptidoglycan (PG) homeostasis and cell length regulation. The sequence is that of RNA-binding protein KhpA from Caldanaerobacter subterraneus subsp. tengcongensis (strain DSM 15242 / JCM 11007 / NBRC 100824 / MB4) (Thermoanaerobacter tengcongensis).